The sequence spans 368 residues: MSFVDGVNSWFSAASYWDGLGPTNVVQPEDDLAFVSQFEEVESAYDNLVKNGMIAPRRKNSFASSVNNPFSTSALSEALNGSVSMSHVPSSGLLKSTLSSTPTAGSNLLGTSPAEPASGLVGSSGFGSSMLGSSLPGNATSNFGSQASTSLLHPRRSTTSLLSSSAHHSRSSYYDLATPTRSSFSYNTVGAASLPSGGLSNLSSSLRSSSKSAGFSLFESASNSFTPSSFIESANMESLSIPSRRRPSSIAPIGTRPSRKEIAFSNSSTPTDQTLRPPNPPAANGNATPVTAVNNVSAVADSPQSTGSSVSSSLPTLSLDFKQEYSGNNHDMSGLSSSLSKSHNSTSALSSQIWSSPCASTLGGVNVW.

Positions 237-287 (ESLSIPSRRRPSSIAPIGTRPSRKEIAFSNSSTPTDQTLRPPNPPAANGNA) are disordered. Residues 238-253 (SLSIPSRRRPSSIAPI) are compositionally biased toward low complexity. Polar residues predominate over residues 264–276 (FSNSSTPTDQTLR).

This is an uncharacterized protein from Schizosaccharomyces pombe (strain 972 / ATCC 24843) (Fission yeast).